Here is a 942-residue protein sequence, read N- to C-terminus: Alanine--tRNA ligase (942 aa).

Zn(2+) is bound by residues His586, His590, Cys695, and His699.

This sequence belongs to the class-II aminoacyl-tRNA synthetase family. Zn(2+) is required as a cofactor.

Its subcellular location is the cytoplasm. The enzyme catalyses tRNA(Ala) + L-alanine + ATP = L-alanyl-tRNA(Ala) + AMP + diphosphate. Its function is as follows. Catalyzes the attachment of alanine to tRNA(Ala) in a two-step reaction: alanine is first activated by ATP to form Ala-AMP and then transferred to the acceptor end of tRNA(Ala). Also edits incorrectly charged Ser-tRNA(Ala) and Gly-tRNA(Ala) via its editing domain. The chain is Alanine--tRNA ligase from Akkermansia muciniphila (strain ATCC BAA-835 / DSM 22959 / JCM 33894 / BCRC 81048 / CCUG 64013 / CIP 107961 / Muc).